Reading from the N-terminus, the 101-residue chain is Small ribosomal subunit protein uS14 (101 aa).

Belongs to the universal ribosomal protein uS14 family. Part of the 30S ribosomal subunit. Contacts proteins S3 and S10.

Its function is as follows. Binds 16S rRNA, required for the assembly of 30S particles and may also be responsible for determining the conformation of the 16S rRNA at the A site. This Zymomonas mobilis subsp. mobilis (strain ATCC 31821 / ZM4 / CP4) protein is Small ribosomal subunit protein uS14.